Here is a 212-residue protein sequence, read N- to C-terminus: Cytidylate kinase (212 aa).

7 to 15 (GPAASGKGT) lines the ATP pocket.

This sequence belongs to the cytidylate kinase family. Type 1 subfamily.

The protein localises to the cytoplasm. It catalyses the reaction CMP + ATP = CDP + ADP. The catalysed reaction is dCMP + ATP = dCDP + ADP. The sequence is that of Cytidylate kinase from Bradyrhizobium sp. (strain ORS 278).